The following is a 139-amino-acid chain: Putative nickel-responsive regulator (139 aa).

Ni(2+) is bound by residues H79, H90, H92, and C98.

It belongs to the transcriptional regulatory CopG/NikR family. Ni(2+) serves as cofactor.

Transcriptional regulator. The polypeptide is Putative nickel-responsive regulator (Nitratidesulfovibrio vulgaris (strain ATCC 29579 / DSM 644 / CCUG 34227 / NCIMB 8303 / VKM B-1760 / Hildenborough) (Desulfovibrio vulgaris)).